A 512-amino-acid chain; its full sequence is ATP synthase subunit alpha (512 aa).

ATP is bound at residue 169–176 (GDRQTGKT).

The protein belongs to the ATPase alpha/beta chains family. In terms of assembly, F-type ATPases have 2 components, CF(1) - the catalytic core - and CF(0) - the membrane proton channel. CF(1) has five subunits: alpha(3), beta(3), gamma(1), delta(1), epsilon(1). CF(0) has three main subunits: a(1), b(2) and c(9-12). The alpha and beta chains form an alternating ring which encloses part of the gamma chain. CF(1) is attached to CF(0) by a central stalk formed by the gamma and epsilon chains, while a peripheral stalk is formed by the delta and b chains.

Its subcellular location is the cell membrane. The catalysed reaction is ATP + H2O + 4 H(+)(in) = ADP + phosphate + 5 H(+)(out). Produces ATP from ADP in the presence of a proton gradient across the membrane. The alpha chain is a regulatory subunit. This is ATP synthase subunit alpha from Elusimicrobium minutum (strain Pei191).